A 334-amino-acid chain; its full sequence is GTP 3',8-cyclase (334 aa).

A Radical SAM core domain is found at 11–235 (GFNRKVDYLR…VESAESSQGP (225 aa)). Arg-20 contacts GTP. Cys-27 and Cys-31 together coordinate [4Fe-4S] cluster. Tyr-33 is a binding site for S-adenosyl-L-methionine. Cys-34 contributes to the [4Fe-4S] cluster binding site. Position 69 (Arg-69) interacts with GTP. Residue Gly-73 participates in S-adenosyl-L-methionine binding. Thr-100 is a binding site for GTP. Ser-124 is an S-adenosyl-L-methionine binding site. Lys-161 serves as a coordination point for GTP. Met-195 is an S-adenosyl-L-methionine binding site. 2 residues coordinate [4Fe-4S] cluster: Cys-260 and Cys-263. 265-267 (RVR) contacts GTP. Position 277 (Cys-277) interacts with [4Fe-4S] cluster.

This sequence belongs to the radical SAM superfamily. MoaA family. Monomer and homodimer. The cofactor is [4Fe-4S] cluster.

It carries out the reaction GTP + AH2 + S-adenosyl-L-methionine = (8S)-3',8-cyclo-7,8-dihydroguanosine 5'-triphosphate + 5'-deoxyadenosine + L-methionine + A + H(+). The protein operates within cofactor biosynthesis; molybdopterin biosynthesis. Catalyzes the cyclization of GTP to (8S)-3',8-cyclo-7,8-dihydroguanosine 5'-triphosphate. The polypeptide is GTP 3',8-cyclase (Pseudomonas entomophila (strain L48)).